The following is a 61-amino-acid chain: Small ribosomal subunit protein uS14 (61 aa).

Cys-24, Cys-27, Cys-40, and Cys-43 together coordinate Zn(2+).

The protein belongs to the universal ribosomal protein uS14 family. Zinc-binding uS14 subfamily. Part of the 30S ribosomal subunit. Contacts proteins S3 and S10. Requires Zn(2+) as cofactor.

Binds 16S rRNA, required for the assembly of 30S particles and may also be responsible for determining the conformation of the 16S rRNA at the A site. The chain is Small ribosomal subunit protein uS14 from Roseiflexus sp. (strain RS-1).